The primary structure comprises 319 residues: Vomeronasal type-1 receptor 96 (319 aa).

The Extracellular segment spans residues M1–S19. Residues E20–F40 traverse the membrane as a helical segment. The Cytoplasmic portion of the chain corresponds to E41–D49. A helical membrane pass occupies residues L50–A70. Residues A71–R93 are Extracellular-facing. A disulfide bridge links C85 with C172. Residues L94–L114 traverse the membrane as a helical segment. Residues S115–C134 are Cytoplasmic-facing. Residues A135–I155 traverse the membrane as a helical segment. At A156–E193 the chain is on the extracellular side. N159 carries an N-linked (GlcNAc...) asparagine glycan. The chain crosses the membrane as a helical span at residues A194–H214. Residues K215–R238 lie on the Cytoplasmic side of the membrane. Residues T239–Q259 traverse the membrane as a helical segment. Residues S260–M269 lie on the Extracellular side of the membrane. Residues F270–I290 form a helical membrane-spanning segment. At F291 to P319 the chain is on the cytoplasmic side.

This sequence belongs to the G-protein coupled receptor 1 family.

The protein resides in the cell membrane. Functionally, putative pheromone receptor implicated in the regulation of social as well as reproductive behavior. This Rattus norvegicus (Rat) protein is Vomeronasal type-1 receptor 96 (Vom1r96).